A 186-amino-acid polypeptide reads, in one-letter code: Guanylate kinase (186 aa).

The Guanylate kinase-like domain occupies 4-182; sequence GKLIVLTGPS…TLQNLDKILF (179 aa). 11 to 18 provides a ligand contact to ATP; that stretch reads GPSGVGKG.

Belongs to the guanylate kinase family.

It localises to the cytoplasm. It carries out the reaction GMP + ATP = GDP + ADP. Essential for recycling GMP and indirectly, cGMP. In Trichodesmium erythraeum (strain IMS101), this protein is Guanylate kinase.